Reading from the N-terminus, the 990-residue chain is Sister chromatid cohesion protein PDS5 homolog E (990 aa).

HEAT repeat units follow at residues 31–57, 58–96, 153–190, 191–228, and 232–269; these read DATLSLLEVMESLLATVEQDLSSSVQK, ALHPPMRALVSADLLRNPDSDVRVSVVSCLTEIMRITAP, DLVLEMFQRFLKIIRPDHPQLVLVSMETIMITVIDESE, EVPMDLLEILLTTVKKDSQDVSPAALTLVEKVLSSCTC, and PCIMEALKSSGTSLDMYSPVVSSICQSEFATTQAHNDV. A disordered region spans residues 262 to 565; it reads TTQAHNDVKP…AGEEVESNTN (304 aa). The span at 267–281 shows a compositional bias: basic and acidic residues; sequence NDVKPKDNEADEKIS. The segment covering 302–314 has biased composition (basic residues); that stretch reads KGTRSKRSARGGT. Polar residues-rich tracts occupy residues 328-342 and 394-410; these read EGLSESTDAETASGS and VGQTNQSVVISLSSSGR. Composition is skewed to basic and acidic residues over residues 421 to 430, 448 to 477, and 503 to 512; these read TKMEETDHDV, PAKEDLTKSNVKKHEDGIKTGKSSKKEKAD, and VHSDAKKKNS. Residues 458–465 carry the Nuclear localization signal 1 motif; it reads VKKHEDGI. 2 consecutive short sequence motifs (nuclear localization signal) follow at residues 539 to 546 and 583 to 590; these read TKKSEQAP and DKKFYEGV. Residues 653-966 are disordered; the sequence is KKRKIVSKNV…VGNEAEEDDQ (314 aa). Low complexity predominate over residues 662–673; sequence VEPSSSPEVRSS. 2 short sequence motifs (nuclear localization signal) span residues 677-684 and 715-722; these read MKKKDSVT and LKKLNGEP. Basic residues predominate over residues 727–742; it reads GRTGKKQKVTQAMHRK. A compositionally biased stretch (acidic residues) spans 746–760; the sequence is DCDEQEDLETKDEED. Basic and acidic residues-rich tracts occupy residues 761 to 810, 819 to 890, and 898 to 947; these read SLKL…KTNG, TDGK…KETN, and EEQK…DKET.

This sequence belongs to the PDS5 family. In terms of assembly, interacts with the cohesin complex.

The protein localises to the nucleus. Functionally, cohesin cofactor dispensable during the meiotic division but playing an important role in DNA repair by homologous recombination (HR) probably by helping SMC5/SMC6 complex. Regulator of sister chromatid cohesion in mitosis which may stabilize cohesin complex association with chromatin. May couple sister chromatid cohesion during mitosis to DNA replication. Cohesion ensures that chromosome partitioning is accurate in both meiotic and mitotic cells and plays an important role in DNA repair. This Arabidopsis thaliana (Mouse-ear cress) protein is Sister chromatid cohesion protein PDS5 homolog E.